Here is a 320-residue protein sequence, read N- to C-terminus: Probable movement protein (320 aa).

Active-site residues include His144, Asp171, and Ser199. Disordered stretches follow at residues 251 to 270 (RRSRSISAKRGPNSRVQEKR) and 286 to 320 (EFGRRASASEAPPGRSISMEDSHRPGKGTSDGSSP).

The protein belongs to the tobamoviruses movement protein family.

Its function is as follows. May play a role in virus cell to cell movement by increasing the size exclusion limit of plasmodesmata and forming a complex with viral RNA to assist its movement. May also have a papain-like protease activity and cleave the genome polyprotein. This is Probable movement protein from Malus sylvestris (European crab apple).